A 41-amino-acid polypeptide reads, in one-letter code: Large ribosomal subunit protein bL36B (41 aa).

Belongs to the bacterial ribosomal protein bL36 family.

The chain is Large ribosomal subunit protein bL36B from Haemophilus ducreyi (strain 35000HP / ATCC 700724).